A 475-amino-acid polypeptide reads, in one-letter code: ATP synthase subunit beta (475 aa).

Residue 152–159 participates in ATP binding; that stretch reads GGAGVGKT.

This sequence belongs to the ATPase alpha/beta chains family. In terms of assembly, F-type ATPases have 2 components, CF(1) - the catalytic core - and CF(0) - the membrane proton channel. CF(1) has five subunits: alpha(3), beta(3), gamma(1), delta(1), epsilon(1). CF(0) has four main subunits: a(1), b(1), b'(1) and c(9-12).

It localises to the cell inner membrane. It carries out the reaction ATP + H2O + 4 H(+)(in) = ADP + phosphate + 5 H(+)(out). Produces ATP from ADP in the presence of a proton gradient across the membrane. The catalytic sites are hosted primarily by the beta subunits. The protein is ATP synthase subunit beta of Cereibacter sphaeroides (strain ATCC 17025 / ATH 2.4.3) (Rhodobacter sphaeroides).